The following is a 557-amino-acid chain: Glypican-4 (557 aa).

A signal peptide spans 1 to 18; that stretch reads MARLGLLALLCTLAALSA. At Ser357 the chain carries Phosphoserine. Residues Ser494, Ser498, and Ser500 are each glycosylated (O-linked (Xyl...) (glycosaminoglycan) serine). Asn514 carries an N-linked (GlcNAc...) asparagine glycan. The GPI-anchor amidated serine moiety is linked to residue Ser529. Positions 530-557 are cleaved as a propeptide — removed in mature form; it reads AGGAHAEAKPYLLAALCILFLAVQGEWR.

It belongs to the glypican family. Highly expressed in developing brain and kidney.

It localises to the cell membrane. The protein resides in the secreted. The protein localises to the extracellular space. Its function is as follows. Cell surface proteoglycan that bears heparan sulfate. May be involved in the development of kidney tubules and of the central nervous system. This Mus musculus (Mouse) protein is Glypican-4 (Gpc4).